The chain runs to 807 residues: Dual specificity protein kinase YAK1 (807 aa).

The span at Met1–Ser19 shows a compositional bias: low complexity. Residues Met1 to Ser84 form a disordered region. Residues Leu20–Ser31 are compositionally biased toward polar residues. Ser38 is modified (phosphoserine). The span at Asn55–Ser84 shows a compositional bias: low complexity. A phosphoserine mark is found at Ser115, Ser118, and Ser127. The interval Arg124–Gly180 is disordered. Polar residues predominate over residues Ala149–Asn160. The span at Ser161–Gly180 shows a compositional bias: low complexity. Residue Ser206 is modified to Phosphoserine. Over residues Ser214–Asn224 the composition is skewed to low complexity. Residues Ser214–Phe254 are disordered. Ser240, Ser245, and Ser247 each carry phosphoserine. Phosphothreonine is present on Thr288. Ser295 carries the post-translational modification Phosphoserine. One can recognise a Protein kinase domain in the interval Tyr369–Ile704. ATP contacts are provided by residues Leu375–Val383 and Lys398. The Proton acceptor role is filled by Asp496. The residue at position 530 (Tyr530) is a Phosphotyrosine. The tract at residues Phe714–Ala758 is disordered. The span at Gly732–Ala758 shows a compositional bias: polar residues.

It belongs to the protein kinase superfamily. CMGC Ser/Thr protein kinase family. MNB/DYRK subfamily. In terms of processing, phosphorylated; highly.

The protein resides in the cytoplasm. Its subcellular location is the nucleus. It carries out the reaction L-seryl-[protein] + ATP = O-phospho-L-seryl-[protein] + ADP + H(+). The enzyme catalyses L-threonyl-[protein] + ATP = O-phospho-L-threonyl-[protein] + ADP + H(+). The catalysed reaction is L-tyrosyl-[protein] + ATP = O-phospho-L-tyrosyl-[protein] + ADP + H(+). In terms of biological role, negative regulator of the cell cycle acting downstream of the cAMP-dependent protein kinase. Part of a glucose-sensing system involved in growth control in response to glucose availability. Phosphorylates POP2. This is Dual specificity protein kinase YAK1 (YAK1) from Saccharomyces cerevisiae (strain ATCC 204508 / S288c) (Baker's yeast).